The primary structure comprises 601 residues: MATIEEIAHQIIEQQMGEIVTEQQTGQKIQIVTALDHNTQGKQFILTNHDGSTPSKVILARQDSTPGKVFLTTPDAAGVNQLFFTTPDLSAQHLQLLTDNSSPDQGPNKVFDLCVVCGDKASGRHYGAVTCEGCKGFFKRSIRKNLVYSCRGSKDCIINKHHRNRCQYCRLQRCIAFGMKQDSVQCERKPIEVSREKSSNCAASTEKIYIRKDLRSPLTATPTFVTDSESTRSTGLLDSGMFVNIHPSGVKTESTVLMTSDKAESCQGDLSTLASVVTSLANLGKTKDLSQNSNEMSMIESLSNDDTSLCEFQEMHTNGDVSRAFDTLAKALNPGESTACQSSVAGMEGSVHLITGDSSINYTEKEGPLLSDSHVAFRLTMPSPMPEYLNVHYIGESASRLLFLSMHWALSIPSFQALGQENSISLVKAYWNELFTLGLAQCWQVMNVATILATFVNCLHNSLQQDKMSTERRKLLMEHIFKLQEFCNSMVKLCIDGYEYAYLKAIVLFSPDHPGLENMEQIEKFQEKAYVEFQDYITKTYPDDTYRLSRLLLRLPALRLMNATITEELFFKGLIGNIRIDSVIPHILKMEPGQYSKTSSL.

The tract at residues 1–179 is required for interaction with KAT2B; sequence MATIEEIAHQ…RLQRCIAFGM (179 aa). The nuclear receptor DNA-binding region spans 111 to 186; it reads FDLCVVCGDK…FGMKQDSVQC (76 aa). 2 NR C4-type zinc fingers span residues 114 to 134 and 150 to 169; these read CVVCGDKASGRHYGAVTCEGC and CRGSKDCIINKHHRNRCQYC. Residues serine 198 and serine 216 each carry the phosphoserine modification. Position 221 is a phosphothreonine (threonine 221). Phosphothreonine; by MAPK1 is present on threonine 223. Lysine 251 participates in a covalent cross-link: Glycyl lysine isopeptide (Lys-Gly) (interchain with G-Cter in SUMO); alternate. Residue lysine 251 forms a Glycyl lysine isopeptide (Lys-Gly) (interchain with G-Cter in SUMO2); alternate linkage. The NR LBD domain occupies 349–591; it reads GSVHLITGDS…SVIPHILKME (243 aa). Serine 582 is modified (phosphoserine; by PKC). Residues 585–601 are required for interaction with NRIP1; sequence PHILKMEPGQYSKTSSL. A Glycyl lysine isopeptide (Lys-Gly) (interchain with G-Cter in SUMO2) cross-link involves residue lysine 589.

Belongs to the nuclear hormone receptor family. NR2 subfamily. Homodimer. Heterodimer; with NR2C2 which is required for chromatin remodeling and for binding to promoter regions such as globin DR1 repeats. Interacts with ESR1; the interaction prevents homodimerization of ESR1 and suppresses its transcriptional activity and cell growth. Interacts with NRIP1 (via its LXXLL motifs); the interaction provides corepressor activity. Interacts with HDAC3 (via the DNA-binding domain); the interaction recruits phosphorylated NR2C1 to PML bodies for sumoylation. Interacts with HDAC4 (via the DNA-binding domain). Interacts with PIAS1; the interaction is required for sumoylation of NR2C1. Interacts with UBE2I; the interaction is required for sumoylation of NR2C1. Interacts with KAT2B; the interaction acts as a corepressor of gene expression. Sumoylation requires both PIAS1 and UBE2I. Sumoylation appears to dissociate NR2C1 from the PML nuclear bodies. Enhances the interaction with NRIP1 but inhibits interaction with KAT2B. In proliferating cells, stimulation by all-trans retinoic acid, activation of MAPK1-mediated phosphorylation and recruitment to PML bodies with subsequent sumoylation, suppresses OCT4 expression. Post-translationally, phosphorylated on several serine and threonine residues. Phosphorylation on Thr-223, stimulated by all-trans retinoic acid (atRA) mediates PML location and sumoylation in proliferating cells which then modulates its association with effector molecules, KAT2B and NRIP1. Phosphorylation on Ser-582 by PKC is important for protein stability and function as activator of RARB.

It localises to the nucleus. It is found in the PML body. Orphan nuclear receptor. Binds the IR7 element in the promoter of its own gene in an autoregulatory negative feedback mechanism. Primarily repressor of a broad range of genes including ESR1 and RARB. Together with NR2C2, forms the core of the DRED (direct repeat erythroid-definitive) complex that represses embryonic and fetal globin transcription. Binds to hormone response elements (HREs) consisting of two 5'-AGGTCA-3' half site direct repeat consensus sequences. Also activator of OCT4 gene expression. Plays a fundamental role in early embryogenesis and regulates embryonic stem cell proliferation and differentiation. Mediator of retinoic acid-regulated preadipocyte proliferation. The chain is Nuclear receptor subfamily 2 group C member 1 (NR2C1) from Pongo abelii (Sumatran orangutan).